The following is a 782-amino-acid chain: General transcription and DNA repair factor IIH helicase/translocase subunit XPB (782 aa).

The segment covering 1-11 has biased composition (basic and acidic residues); it reads MGKRDRADREK. A disordered region spans residues 1–51; that stretch reads MGKRDRADREKKKSKKRHYEDEEDEEDDAPGNDTQEAVPSAAGKQVDESGT. The short motif at 6-18 is the Nuclear localization signal element; that stretch reads RADREKKKSKKRH. Acidic residues predominate over residues 21-30; that stretch reads DEEDEEDDAP. The Helicase ATP-binding domain occupies 327 to 488; sequence MFGNGRARSG…DLNFLIGPKL (162 aa). 340–347 provides a ligand contact to ATP; the sequence is LPCGAGKS. Residues 441–444 carry the DEVH box motif; sequence DEVH. The 161-residue stretch at 542–702 folds into the Helicase C-terminal domain; sequence RACQFLIKFH…LAGMEEEDLA (161 aa). Ser-686 is subject to Phosphoserine. The residue at position 751 (Ser-751) is a Phosphoserine; by CK2.

It belongs to the helicase family. RAD25/XPB subfamily. In terms of assembly, component of the 7-subunit TFIIH core complex composed of XPB/ERCC3, XPD/ERCC2, GTF2H1, GTF2H2, GTF2H3, GTF2H4 and GTF2H5, which is active in NER. The core complex associates with the 3-subunit CDK-activating kinase (CAK) module composed of CCNH/cyclin H, CDK7 and MNAT1 to form the 10-subunit holoenzyme (holo-TFIIH) active in transcription. Interacts with PUF60. Interacts with ATF7IP. Interacts with KAT2A; leading to KAT2A recruitment to promoters and acetylation of histones. Part of TBP-based Pol II pre-initiation complex (PIC), in which Pol II core assembles with general transcription factors and other specific initiation factors including GTF2E1, GTF2E2, GTF2F1, GTF2F2, TCEA1, ERCC2, ERCC3, GTF2H2, GTF2H3, GTF2H4, GTF2H5, GTF2A1, GTF2A2, GTF2B and TBP; this large multi-subunit PIC complex mediates DNA unwinding and targets Pol II core to the transcription start site where the first phosphodiester bond forms. In terms of processing, phosphorylation on Ser-751 by CK2 controls the 5'-excision activity of ERCC1-XPF endonuclease; phosphorylated protein inhibits the excision activity and thus NER. Dephosphorylation reactivates the 5'-excision step. Phosphorylation has no effect on transcription or the 3'-5' helicase activity.

The protein resides in the nucleus. It carries out the reaction Couples ATP hydrolysis with the unwinding of duplex DNA by translocating in the 3'-5' direction.. The catalysed reaction is ATP + H2O = ADP + phosphate + H(+). With respect to regulation, phosphorylation on Ser-751 by CK2 controls the 5'-excision activity of ERCC1-XPF endonuclease; phosphorylated protein inhibits the excision activity and thus NER. ATPase activity is stimulated by TFIIH subunit p52 (GTF2H4). DNA translocase activity by this subunit in TFIIH is stimulated by XPA, ERCC5/XPG and XFP plus ERCC1. Functionally, ATP-dependent 3'-5' DNA helicase/translocase; binds dsDNA rather than ssDNA, unzipping it in a translocase rather than classical helicase activity. Component of the general transcription and DNA repair factor IIH (TFIIH) core complex. When complexed to CDK-activating kinase (CAK), involved in RNA transcription by RNA polymerase II. The ATPase activity of XPB/ERCC3, but not its helicase activity, is required for DNA opening; it may wrap around the damaged DNA wedging it open, causing localized melting and twisting that allows XPD/ERCC2 helicase to anchor. The ATP-dependent helicase activity of XPB/ERCC3 may be required for promoter escape. Also involved in transcription-coupled nucleotide excision repair (NER) of damaged DNA. In NER, TFIIH acts by opening DNA around the lesion to allow the excision of the damaged oligonucleotide and its replacement by a new DNA fragment. The structure of the TFIIH transcription complex differs from the NER-TFIIH complex; large movements by XPD/ERCC2 and XPB/ERCC3 are stabilized by XPA. The chain is General transcription and DNA repair factor IIH helicase/translocase subunit XPB (ERCC3) from Bos taurus (Bovine).